A 97-amino-acid polypeptide reads, in one-letter code: Cobalt transport protein CbiN (97 aa).

The next 2 helical transmembrane spans lie at 6-26 (VLMILGVIILTLAPLIMYSGL) and 68-88 (SLLFALQAAIGALIIGYFFGY).

It belongs to the CbiN family. Forms an energy-coupling factor (ECF) transporter complex composed of an ATP-binding protein (A component, CbiO), a transmembrane protein (T component, CbiQ) and 2 possible substrate-capture proteins (S components, CbiM and CbiN) of unknown stoichimetry.

The protein resides in the cell membrane. The protein operates within cofactor biosynthesis; adenosylcobalamin biosynthesis. In terms of biological role, part of the energy-coupling factor (ECF) transporter complex CbiMNOQ involved in cobalt import. The polypeptide is Cobalt transport protein CbiN (Methanococcus maripaludis (strain C7 / ATCC BAA-1331)).